A 285-amino-acid polypeptide reads, in one-letter code: Dihydropteroate synthase (285 aa).

Residues 25-271 form the Pterin-binding domain; that stretch reads TLVMGILNVT…DVKQIARMAK (247 aa). N32 is a binding site for Mg(2+). (7,8-dihydropterin-6-yl)methyl diphosphate contacts are provided by residues T72, D106, N125, D189, K225, and 259–261; that span reads RVH.

The protein belongs to the DHPS family. Requires Mg(2+) as cofactor.

The catalysed reaction is (7,8-dihydropterin-6-yl)methyl diphosphate + 4-aminobenzoate = 7,8-dihydropteroate + diphosphate. The protein operates within cofactor biosynthesis; tetrahydrofolate biosynthesis; 7,8-dihydrofolate from 2-amino-4-hydroxy-6-hydroxymethyl-7,8-dihydropteridine diphosphate and 4-aminobenzoate: step 1/2. Functionally, catalyzes the condensation of para-aminobenzoate (pABA) with 6-hydroxymethyl-7,8-dihydropterin diphosphate (DHPt-PP) to form 7,8-dihydropteroate (H2Pte), the immediate precursor of folate derivatives. The polypeptide is Dihydropteroate synthase (sul) (Bacillus subtilis (strain 168)).